The chain runs to 193 residues: MARNANITRETKETKIEVFLDIDRKGEIKVSTPVPFFNHMLITLLTYMNSTATVSATDKLPYDDHHIIEDVAITLGLAIKEALGDKRGIKRFSHQIIPMDEALVLVSLDISNRGMAFVSLNLKRSEIGGLATENIPHFFQSFAYNSGVTLHISQLSGYNTHHIIEASFKALGLALYEATRIVDNEIRSTKGVI.

The protein belongs to the imidazoleglycerol-phosphate dehydratase family.

Its subcellular location is the cytoplasm. The enzyme catalyses D-erythro-1-(imidazol-4-yl)glycerol 3-phosphate = 3-(imidazol-4-yl)-2-oxopropyl phosphate + H2O. The protein operates within amino-acid biosynthesis; L-histidine biosynthesis; L-histidine from 5-phospho-alpha-D-ribose 1-diphosphate: step 6/9. This Saccharolobus islandicus (strain Y.N.15.51 / Yellowstone #2) (Sulfolobus islandicus) protein is Imidazoleglycerol-phosphate dehydratase.